The following is a 260-amino-acid chain: 3-alpha-(or 20-beta)-hydroxysteroid dehydrogenase (260 aa).

Positions 17, 19, 38, 61, 62, 88, 153, 157, 186, 188, and 191 each coordinate NAD(+). The active-site Proton acceptor is Y153.

It belongs to the short-chain dehydrogenases/reductases (SDR) family. Homotetramer.

The catalysed reaction is androstan-3alpha,17beta-diol + NAD(+) = 17beta-hydroxyandrostanone + NADH + H(+). It participates in lipid metabolism; steroid degradation. Functionally, probably involved in steroid metabolism. In Mycobacterium tuberculosis (strain CDC 1551 / Oshkosh), this protein is 3-alpha-(or 20-beta)-hydroxysteroid dehydrogenase (fabG3).